The sequence spans 213 residues: High frequency lysogenization protein HflD homolog (213 aa).

This sequence belongs to the HflD family.

It is found in the cytoplasm. The protein localises to the cell inner membrane. In Nitrosococcus oceani (strain ATCC 19707 / BCRC 17464 / JCM 30415 / NCIMB 11848 / C-107), this protein is High frequency lysogenization protein HflD homolog.